A 372-amino-acid chain; its full sequence is UDP-N-acetylglucosamine 2-epimerase (372 aa).

Substrate is bound by residues arginine 10, lysine 15, aspartate 95, glutamate 117, histidine 212, glutamine 270, phenylalanine 275, 289–291 (SGG), glutamate 295, and arginine 312.

Belongs to the UDP-N-acetylglucosamine 2-epimerase family.

It catalyses the reaction UDP-N-acetyl-alpha-D-glucosamine = UDP-N-acetyl-alpha-D-mannosamine. The protein operates within capsule biogenesis; capsule polysaccharide biosynthesis. Activated by UDP-GlcNAc and inhibited by 2-acetamidoglucal and UDP. Activity is strongly decreased in the presence of Co(2+) and abolished in the presence of Mn(2+) or Zn(2+). In terms of biological role, catalyzes the interconversion between UDP-N-acetylglucosamine (UDP-GlcNAc) and UDP-N-acetylmannosamine (UDP-ManNAc). Involved in the biosynthesis of the capsular polysaccharides. In vitro, can also use several chemoenzymatically synthesized UDP-ManNAc derivatives as substrates, with lower efficiency. This chain is UDP-N-acetylglucosamine 2-epimerase, found in Neisseria meningitidis serogroup A / serotype 4A (strain DSM 15465 / Z2491).